The primary structure comprises 1158 residues: MAAVRGAPLLSCLLALLALCPGGRPQTVLTDDEIEEFLEGFLSELEPEPREDDVEAPPPPEPTPRVRKAQAGGKPGKRPGTAAEVPPEKTKDKGKKGKKDKGPKVPKESLEGSPRPPKKGKEKPPKATKKPKEKPPKATKKPKEKPPKATKKPKEKPPKATKKPPSGKRPPILAPSETLEWPLPPPPSPGPEELPQEGGAPLSNNWQNPGEETHVEAREHQPEPEEETEQPTLDYNDQIEREDYEDFEYIRRQKQPRPPPSRRRRPERVWPEPPEEKAPAPAPEERIEPPVKPLLPPLPPDYGDGYVIPNYDDMDYYFGPPPPQKPDAERQTDEEKEELKKPKKEDSSPKEETDKWAVEKGKDHKEPRKGEELEEEWTPTEKVKCPPIGMESHRIEDNQIRASSMLRHGLGAQRGRLNMQTGATEDDYYDGAWCAEDDARTQWIEVDTRRTTRFTGVITQGRDSSIHDDFVTTFFVGFSNDSQTWVMYTNGYEEMTFHGNVDKDTPVLSELPEPVVARFIRIYPLTWNGSLCMRLEVLGCSVAPVYSYYAQNEVVATDDLDFRHHSYKDMRQLMKVVNEECPTITRTYSLGKSSRGLKIYAMEISDNPGEHELGEPEFRYTAGIHGNEVLGRELLLLLMQYLCREYRDGNPRVRSLVQDTRIHLVPSLNPDGYEVAAQMGSEFGNWALGLWTEEGFDIFEDFPDLNSVLWGAEERKWVPYRVPNNNLPIPERYLSPDATVSTEVRAIIAWMEKNPFVLGANLNGGERLVSYPYDMARTPTQEQLLAAAMAAARGEDEDEVSEAQETPDHAIFRWLAISFASAHLTLTEPYRGGCQAQDYTGGMGIVNGAKWNPRTGTINDFSYLHTNCLELSFYLGCDKFPHESELPREWENNKEALLTFMEQVHRGIKGVVTDEQGIPIANATISVSGINHGVKTASGGDYWRILNPGEYRVTAHAEGYTPSAKTCNVDYDIGATQCNFILARSNWKRIREIMAMNGNRPIPHIDPSRPMTPQQRRLQQRRLQHRLRLRAQMRLRRLNATTTLGPHTVPPTLPPAPATTLSTTIEPWGLIPPTTAGWEESETETYTEVVTEFGTEVEPEFGTKVEPEFETQLEPEFETQLEPEFEEEEEEEKEEEIATGQAFPFTTVETYTVNFGDF.

Positions 1-25 (MAAVRGAPLLSCLLALLALCPGGRP) are cleaved as a signal peptide. The segment at 41–387 (FLSELEPEPR…TPTEKVKCPP (347 aa)) is disordered. Acidic residues predominate over residues 45–55 (LEPEPREDDVE). Over residues 100-110 (DKGPKVPKESL) the composition is skewed to basic and acidic residues. The segment covering 116–166 (PPKKGKEKPPKATKKPKEKPPKATKKPKEKPPKATKKPKEKPPKATKKPPS) has biased composition (basic residues). The span at 182 to 192 (PLPPPPSPGPE) shows a compositional bias: pro residues. Positions 193–202 (ELPQEGGAPL) are enriched in low complexity. Positions 211–223 (EETHVEAREHQPE) are enriched in basic and acidic residues. Basic residues predominate over residues 252 to 266 (RQKQPRPPPSRRRRP). Over residues 267–289 (ERVWPEPPEEKAPAPAPEERIEP) the composition is skewed to basic and acidic residues. Positions 290–300 (PVKPLLPPLPP) are enriched in pro residues. Positions 326-371 (PDAERQTDEEKEELKKPKKEDSSPKEETDKWAVEKGKDHKEPRKGE) are enriched in basic and acidic residues. The 158-residue stretch at 383-540 (VKCPPIGMES…LCMRLEVLGC (158 aa)) folds into the F5/8 type C domain. Residues 390 to 555 (MESHRIEDNQ…YSYYAQNEVV (166 aa)) form a required for DNA-binding and interaction with NFKBIA region. Residues 421–624 (TGATEDDYYD…EPEFRYTAGI (204 aa)) are interaction with MAPK1 and MAPK3. N528 carries N-linked (GlcNAc...) asparagine glycosylation. The interaction with PTEN stretch occupies residues 555 to 985 (VATDDLDFRH…TQCNFILARS (431 aa)). One can recognise a Peptidase M14 domain in the interval 563–904 (RHHSYKDMRQ…EALLTFMEQV (342 aa)). N-linked (GlcNAc...) asparagine glycosylation is present at N922. Residues 941 to 1158 (DYWRILNPGE…ETYTVNFGDF (218 aa)) are required for transcriptional repression. The tract at residues 1006-1158 (DPSRPMTPQQ…ETYTVNFGDF (153 aa)) is interaction with MAPK1 and MAPK3. Over residues 1108–1137 (EFETQLEPEFETQLEPEFEEEEEEEKEEEI) the composition is skewed to acidic residues. Residues 1108 to 1141 (EFETQLEPEFETQLEPEFEEEEEEEKEEEIATGQ) form a disordered region.

The protein belongs to the peptidase M14 family. Isoform 1: Interacts with different types of collagen, including collagens I, III, and V. Isoform 2: Interacts with GNG5, NFKBIA, MAPK1, MAPK3 and PTEN. Interaction with MAPK1 may stimulate DNA-binding. May interact with calmodulin. Binds to DNA in vitro. Post-translationally, phosphorylated by MAPK1 in vitro. As to expression, expressed in osteoblast and visceral fat.

It localises to the secreted. It is found in the cytoplasm. The protein resides in the nucleus. In terms of biological role, as a positive regulator of collagen fibrillogenesis, it is probably involved in the organization and remodeling of the extracellular matrix. May positively regulate MAP-kinase activity in adipocytes, leading to enhanced adipocyte proliferation and reduced adipocyte differentiation. May also positively regulate NF-kappa-B activity in macrophages by promoting the phosphorylation and subsequent degradation of I-kappa-B-alpha (NFKBIA), leading to enhanced macrophage inflammatory responsiveness. Can act as a transcriptional repressor. This chain is Adipocyte enhancer-binding protein 1 (AEBP1), found in Homo sapiens (Human).